We begin with the raw amino-acid sequence, 537 residues long: MKSWVRQGRRLVLVGMLAWVLLFLALLSYFLDARVNEPLTSTGSVLYQHPDTRRLASIQASQLHNTNLGSRPELASTLTATYTRDEPRPSATPEFSLEASQSPDSAPLAIYGGPEGIHQDYLDPQSLAAWSSFGTENIGSQSDPVIQSRERTSQNHGSITRYRGGEEEEEEEEEEERQENEDEDVANGLRNTAARKPGGDSSELEKYYFSKSISVVQRLWRGHVSADMLSPRLQRAMKDYVSANKHQVSYRGRRRPSQSAKELLCEMKAQARLQMVDGTQQPFSSLGWASLVPSLPLEQLHKRPDQGSFKSCAVVTSAGAILRSGLGREIDAHDAVLRFNAAPTEGYERDVGNKTTIRIINSQILANPNHRFNTSSLYKDVVLVAWDPAPYTLDLHKWYASPDYNLFGPYMEHRRAHPDQPFYILHPRYVWRLWDVIQGNTQENIQPNPPSSGFIGILLMMTLCEQVHVYEYIPSMRQSDLCHYHERYYDAACTLGAYHPLLYEKSLIQRINTGPGSDLRRKGRVTLPGFSTVDCDI.

At 1–10 (MKSWVRQGRR) the chain is on the cytoplasmic side. A helical; Signal-anchor for type II membrane protein membrane pass occupies residues 11–31 (LVLVGMLAWVLLFLALLSYFL). At 32 to 537 (DARVNEPLTS…PGFSTVDCDI (506 aa)) the chain is on the lumenal side. 2 disordered regions span residues 83 to 117 (TRDEPRPSATPEFSLEASQSPDSAPLAIYGGPEGI) and 134 to 202 (GTEN…GDSS). Positions 134–145 (GTENIGSQSDPV) are enriched in polar residues. Over residues 166–185 (EEEEEEEEEEERQENEDEDV) the composition is skewed to acidic residues. Intrachain disulfides connect Cys265-Cys535, Cys312-Cys464, and Cys482-Cys493. N-linked (GlcNAc...) asparagine glycosylation is found at Asn353 and Asn373.

It belongs to the glycosyltransferase 29 family.

It is found in the golgi apparatus. It localises to the golgi stack membrane. The catalysed reaction is a beta-D-galactoside + CMP-N-acetyl-beta-neuraminate = an N-acetyl-alpha-neuraminyl-(2-&gt;6)-beta-D-galactosyl derivative + CMP + H(+). In terms of biological role, transfers sialic acid from the donor of substrate CMP-sialic acid to galactose containing acceptor substrates. This Takifugu rubripes (Japanese pufferfish) protein is Beta-galactoside alpha-2,6-sialyltransferase 2 (st6gal2).